Consider the following 295-residue polypeptide: MSKVTGSERVKRGMAEMQKGGVIMDVVNAEQAKIAEEAGAVAVMALERVPSDIRAAGGVARMANPKIVEEVMNAVSIPVMAKGRIGHITEARVLESMGVDYIDESEVLTPADEEYHLRKDTFTVPFVCGCRNLGEAARRIGEGAAMLRTKGEPGTGNIVEAVRHMRQVNSEVSRLTVMNDDEIMTEAKNIGAPYEVLKNIKENGKLPVVNFAAGGVATPQDAALMMELGADGVFVGSGIFKSEDPEKFAKAIVQATTHYQDYELIGRLAKELGIAMKGLDINDLSLEERMQERGW.

Position 25 (D25) interacts with D-ribose 5-phosphate. The Schiff-base intermediate with D-ribose 5-phosphate role is filled by K82. G154 serves as a coordination point for D-ribose 5-phosphate. R166 is a binding site for D-glyceraldehyde 3-phosphate. D-ribose 5-phosphate contacts are provided by residues G215 and 236-237 (GS).

Belongs to the PdxS/SNZ family. In the presence of PdxT, forms a dodecamer of heterodimers.

The catalysed reaction is aldehydo-D-ribose 5-phosphate + D-glyceraldehyde 3-phosphate + L-glutamine = pyridoxal 5'-phosphate + L-glutamate + phosphate + 3 H2O + H(+). The protein operates within cofactor biosynthesis; pyridoxal 5'-phosphate biosynthesis. Functionally, catalyzes the formation of pyridoxal 5'-phosphate from ribose 5-phosphate (RBP), glyceraldehyde 3-phosphate (G3P) and ammonia. The ammonia is provided by the PdxT subunit. Can also use ribulose 5-phosphate and dihydroxyacetone phosphate as substrates, resulting from enzyme-catalyzed isomerization of RBP and G3P, respectively. The polypeptide is Pyridoxal 5'-phosphate synthase subunit PdxS (Staphylococcus saprophyticus subsp. saprophyticus (strain ATCC 15305 / DSM 20229 / NCIMB 8711 / NCTC 7292 / S-41)).